We begin with the raw amino-acid sequence, 271 residues long: Shikimate dehydrogenase (NADP(+)) (271 aa).

Shikimate-binding positions include 14–16 (SLS) and T61. The active-site Proton acceptor is the K65. Positions 86 and 101 each coordinate shikimate. Residues 125-129 (GAGGA) and I212 each bind NADP(+). Shikimate is bound at residue Y214. Position 235 (G235) interacts with NADP(+).

This sequence belongs to the shikimate dehydrogenase family. As to quaternary structure, homodimer.

It carries out the reaction shikimate + NADP(+) = 3-dehydroshikimate + NADPH + H(+). The protein operates within metabolic intermediate biosynthesis; chorismate biosynthesis; chorismate from D-erythrose 4-phosphate and phosphoenolpyruvate: step 4/7. Functionally, involved in the biosynthesis of the chorismate, which leads to the biosynthesis of aromatic amino acids. Catalyzes the reversible NADPH linked reduction of 3-dehydroshikimate (DHSA) to yield shikimate (SA). This Clostridium perfringens (strain SM101 / Type A) protein is Shikimate dehydrogenase (NADP(+)).